Consider the following 269-residue polypeptide: Protein tio (269 aa).

A compositionally biased stretch (basic and acidic residues) spans 1-12 (MANEPQEHEEGK). The tract at residues 1-127 (MANEPQEHEE…NETKCPDEQN (127 aa)) is disordered. Topologically, residues 1–246 (MANEPQEHEE…VEKKLTCVIC (246 aa)) are cytoplasmic. The segment covering 27–41 (PNIPQDPTPGTPPGP) has biased composition (pro residues). The segment covering 61–74 (SEGPPDGSGNSSPP) has biased composition (low complexity). Composition is skewed to polar residues over residues 91-101 (SESGGNNSAPN) and 114-127 (AGNG…DEQN). The residue at position 136 (Tyr-136) is a Phosphotyrosine; by host LCK. A CSKH/LBD2 region spans residues 158-167 (EEERSPFNKY). Residues 186–195 (IPPPQLPPRP) are SH3B/LBD1. A helical membrane pass occupies residues 247 to 267 (LLIGILVLLILLFMLGFLFLL). Residues 268 to 269 (MK) lie on the Extracellular side of the membrane.

As to quaternary structure, homodimer. Binds SH3 domain of host LYN, HCK, LCK, SRC, FYN or YES. When tyrosine-phosphorylated, binds to the SH2 domain of host LCK, SRC, or FYN. Phosphorylated by host LCK, SRC and less efficiently by FYN.

The protein resides in the host cell membrane. Transforms host T-cells, inducing T-cell lymphomia in the host. Activates at least SRC and LCK tyrosines kinases, thereby activating signaling pathway transforming host T-cells. Human T-cells transformed ex vivo display a IL2 indenpendent growth phenotype. In Ateles (AtHV-3), this protein is Protein tio.